The chain runs to 380 residues: Cytochrome b (380 aa).

The next 4 membrane-spanning stretches (helical) occupy residues 34 to 54, 78 to 99, 114 to 134, and 179 to 199; these read FGSL…LLAM, WLIR…YLHI, WNTG…GYVL, and FFAL…IHLT. Positions 84 and 98 each coordinate heme b. Heme b contacts are provided by H183 and H197. H202 is an a ubiquinone binding site. A run of 4 helical transmembrane segments spans residues 227-247, 289-309, 321-341, and 348-368; these read LKDI…ALFS, LGGV…PFLH, LSQL…WVGS, and FIII…ILFP.

It belongs to the cytochrome b family. As to quaternary structure, the cytochrome bc1 complex contains 11 subunits: 3 respiratory subunits (MT-CYB, CYC1 and UQCRFS1), 2 core proteins (UQCRC1 and UQCRC2) and 6 low-molecular weight proteins (UQCRH/QCR6, UQCRB/QCR7, UQCRQ/QCR8, UQCR10/QCR9, UQCR11/QCR10 and a cleavage product of UQCRFS1). This cytochrome bc1 complex then forms a dimer. Heme b is required as a cofactor.

It localises to the mitochondrion inner membrane. Functionally, component of the ubiquinol-cytochrome c reductase complex (complex III or cytochrome b-c1 complex) that is part of the mitochondrial respiratory chain. The b-c1 complex mediates electron transfer from ubiquinol to cytochrome c. Contributes to the generation of a proton gradient across the mitochondrial membrane that is then used for ATP synthesis. This Macronectes giganteus (Southern giant petrel) protein is Cytochrome b (MT-CYB).